Consider the following 318-residue polypeptide: Apo-salmochelin esterase (318 aa).

The helical transmembrane segment at K13–A32 threads the bilayer. Catalysis depends on residues S189 and H287.

This sequence belongs to the esterase D family. Monomer.

It is found in the cell inner membrane. It carries out the reaction enterobactin + H2O = N-(2,3-dihydroxybenzoyl)-L-serine trimer. The catalysed reaction is monoglucosyl-enterobactin + H2O = [N-(2,3-dihydroxybenzoyl)-L-seryl]2-N-(C-5-[deoxy-beta-D-glucosyl]-2,3-dihydroxybenzoyl)-L-serine + H(+). The enzyme catalyses diglucosyl-enterobactin + H2O = N-(2,3-dihydroxybenzoyl)-L-seryl-[N-(C-5-[deoxy-beta-D-glucosyl]-2,3-dihydroxybenzoyl)-L-serine]2 + H(+). It catalyses the reaction triglucosyl-enterobactin + H2O = [N-(C-5-[deoxy-beta-D-glucosyl]-2,3-dihydroxybenzoyl)-L-serine]3 + H(+). Catalyzes the hydrolysis of both the apo and Fe3(+)-bound forms of enterobactin (Ent), monoglucosyl-C-Ent (MGE), diglucosyl-C-Ent (DGE) and triglucosyl-C-Ent (TGE). It prefers apo siderophores as substrates and hydrolyzes the Fe3(+)-bound siderophores very inefficiently. Tends to hydrolyze the trilactone just once to produce linearized trimers. May hydrolyze and linearize some or all of apo enterobactins while they are being exported. This Escherichia coli O6:H1 (strain CFT073 / ATCC 700928 / UPEC) protein is Apo-salmochelin esterase.